The following is a 251-amino-acid chain: Probable transcriptional regulatory protein Pmob_0807 (251 aa).

Residues 1–22 (MSGHNKWANIKHRKGAQDAKRS) are disordered.

This sequence belongs to the TACO1 family.

It is found in the cytoplasm. The sequence is that of Probable transcriptional regulatory protein Pmob_0807 from Petrotoga mobilis (strain DSM 10674 / SJ95).